A 388-amino-acid polypeptide reads, in one-letter code: Aldolase vrtJ (388 aa).

The residue at position 241 (Lys241) is an N6-(pyridoxal phosphate)lysine.

The protein belongs to the threonine aldolase family. Pyridoxal 5'-phosphate is required as a cofactor.

It functions in the pathway secondary metabolite biosynthesis; terpenoid biosynthesis. Functionally, aldolase; part of the gene cluster that mediates the biosynthesis of viridicatumtoxin, a tetracycline-like fungal meroterpenoid with a unique, fused spirobicyclic ring system. The first step of the pathway is the production of the malonamoyl-CoA starter unit for the polyketide synthase vrtA. The aldolase vrtJ may be involved in the synthesis of the malonamate substrate for malonamoyl-CoA synthetase vrtB. The polyketide synthase vrtA then may utilize the malonamoyl-CoA starter unit, followed by sequential condensation of eight malonyl-CoA units to form the polyketide backbone. The cyclization of the last ring could be mediated by the lactamase-like protein vrtG. The proposed post-PKS tailoring steps are a hydroxylation at C5 catalyzed the cytochrome P450 monooxygenase vrtE, a hydroxylation at C12a catalyzed by VrtH and/or VrtI, and an O-methylation by the O-methyltransferase vrtF. VrtC is then proposed to catalyze the transfer of a geranyl group synthesized by vrtD to the aromatic C ring of the tetracyclic polyketide intermediate of viridicatumtoxin to yield previridicatumtoxin. Finally, the cytochrome P450 monooxygenase vrtK catalyzes the spirocyclization of the geranyl moiety of previridicatumtoxin to afford viridicatumtoxin. This is Aldolase vrtJ from Penicillium aethiopicum.